Here is an 820-residue protein sequence, read N- to C-terminus: Serine/threonine-protein phosphatase 4 regulatory subunit 3B (820 aa).

The region spanning 1–100 (MSDTRRRVKV…DEIWEKICQV (100 aa)) is the WH1 domain. Phosphoserine is present on residues serine 117 and serine 663. Residues 687–820 (EDDDEEGKAV…SPRKRPRLGS (134 aa)) form a disordered region. Over residues 701–732 (EKSKTEDDFPDSYEKFMETKKAKESEDKENLP) the composition is skewed to basic and acidic residues. Residues 744–789 (FSHSPSATNGTNSTNSKSVVSQTTPASSNVASSKTTSLATSVTATK) are compositionally biased toward polar residues. Over residues 798–809 (YPDDEEEDEEEE) the composition is skewed to acidic residues. Position 811 is a phosphoserine (serine 811).

This sequence belongs to the SMEK family. Serine/threonine-protein phosphatase 4 (PP4) occurs in different assemblies of the catalytic and one or more regulatory subunits. Component of the PP4 complex PPP4C-PPP4R2-PPP4R3B.

Its subcellular location is the cytoplasm. The protein resides in the cytoskeleton. It localises to the microtubule organizing center. It is found in the centrosome. The protein localises to the nucleus. Functionally, regulatory subunit of serine/threonine-protein phosphatase 4 (PP4). May regulate the activity of PPP4C at centrosomal microtubule organizing centers. The polypeptide is Serine/threonine-protein phosphatase 4 regulatory subunit 3B (Mus musculus (Mouse)).